We begin with the raw amino-acid sequence, 185 residues long: Ribosome-recycling factor (185 aa).

Belongs to the RRF family.

Its subcellular location is the cytoplasm. In terms of biological role, responsible for the release of ribosomes from messenger RNA at the termination of protein biosynthesis. May increase the efficiency of translation by recycling ribosomes from one round of translation to another. The chain is Ribosome-recycling factor from Corynebacterium jeikeium (strain K411).